The primary structure comprises 1994 residues: Protein-methionine sulfoxide oxidase mical3a (1994 aa).

The monooxygenase domain stretch occupies residues 2-498 (GDGGVNAVGE…RHLLDTGETR (497 aa)). Residues Cys101, 101-129 (CGLRTAIELGFLGAKVVLLEKRDAFSRNN), Glu120, Arg122, Arg127, Asn129, and Asp402 contribute to the FAD site. A Calponin-homology (CH) domain is found at 521–627 (IVRSSKLLNW…YLSQFYEMFK (107 aa)). Positions 666–708 (ISRKRNPKDKKEKELDGLGKRRKTSQAGQSEDEELQRANRDDR) are disordered. Residues 674–684 (DKKEKELDGLG) are compositionally biased toward basic and acidic residues. The region spanning 772–834 (DVCFFCRKRV…KPHYCYRLSG (63 aa)) is the LIM zinc-binding domain. Disordered regions lie at residues 843 to 900 (PAAA…LKGT), 917 to 1064 (EELE…AEAR), 1176 to 1263 (SQPV…ELKK), 1281 to 1476 (LGLT…REEV), 1493 to 1555 (VEDT…SPEA), and 1598 to 1747 (KVAW…LRLR). Acidic residues-rich tracts occupy residues 917–926 (EELEEVPEET) and 951–961 (SDMEEEDEDAE). Over residues 975 to 987 (EAVELHAKLKGES) the composition is skewed to basic and acidic residues. 2 stretches are compositionally biased toward acidic residues: residues 1001 to 1037 (GEMDEDEEEEEDEEDEDEEEEEESSEEPCEEDDDPEA) and 1046 to 1060 (PGTEIDQEDIPSDAE). Polar residues predominate over residues 1200–1215 (PTGNPLSPICTQSQPC). Basic and acidic residues-rich tracts occupy residues 1249-1263 (RTNEHLKDSTPELKK) and 1287-1297 (ERSKTAVEKSI). Composition is skewed to low complexity over residues 1299–1314 (KTPTPESSSPKSYTPE) and 1358–1368 (SSSSGLGLNGS). A compositionally biased stretch (polar residues) spans 1369-1389 (VTTSQTAASDSYNNSDSTMLT). Residues 1437-1458 (PVSPPQPKQKPVTAPVPTPRTN) are compositionally biased toward pro residues. A compositionally biased stretch (basic and acidic residues) spans 1464–1476 (RVKEPNKPRREEV). Residues 1616 to 1635 (AQKDSAVKALESKKQADTLP) are compositionally biased toward basic and acidic residues. The segment covering 1649–1660 (SSVTSSESSTGG) has biased composition (low complexity). A compositionally biased stretch (basic residues) spans 1661 to 1679 (KSKKRSSLFSPRKNKKEKK). The span at 1680 to 1693 (AKNERLSSTEETPP) shows a compositional bias: basic and acidic residues. A compositionally biased stretch (low complexity) spans 1718–1729 (CPSTPSSSTTGD). Residues 1730–1746 (SGKKKDSPLDRSSDLRL) are compositionally biased toward basic and acidic residues. 2 coiled-coil regions span residues 1796–1855 (EEEL…KALR) and 1894–1960 (QEKN…EQRD). Residues 1816 to 1982 (KQEELKRLHR…EKEEDKDLEA (167 aa)) form the bMERB domain.

It belongs to the Mical family. FAD is required as a cofactor.

It localises to the cytoplasm. Its subcellular location is the cytoskeleton. It is found in the nucleus. It catalyses the reaction L-methionyl-[F-actin] + NADPH + O2 + H(+) = L-methionyl-(R)-S-oxide-[F-actin] + NADP(+) + H2O. Monooxygenase that promotes depolymerization of F-actin by mediating oxidation of specific methionine residues on actin. Acts by modifying actin subunits through the addition of oxygen to form methionine-sulfoxide, leading to promote actin filament severing and prevent repolymerization. Involved in exocytic vesicles tethering and fusion: the monooxygenase activity is required for this process. The polypeptide is Protein-methionine sulfoxide oxidase mical3a (mical3a) (Danio rerio (Zebrafish)).